The following is a 575-amino-acid chain: GBF-interacting protein 1-like (575 aa).

Disordered stretches follow at residues 66-171 and 229-296; these read SKRE…SKSD and SSSN…VVHS. 3 stretches are compositionally biased toward polar residues: residues 90–102, 115–138, and 161–171; these read FASSNSYQGSGRN, TRGSRTAQPATNKASNITVPNETK, and ISASRCSSKSD. The span at 268 to 281 shows a compositional bias: basic and acidic residues; it reads AREETSTVSEDKDY.

This sequence belongs to the GIP1 family. In terms of tissue distribution, expressed in roots, leaves, stems and flowers.

The protein localises to the nucleus. Functionally, may act as a transcriptional coactivator of LOB domain-containing proteins. The chain is GBF-interacting protein 1-like from Arabidopsis thaliana (Mouse-ear cress).